Reading from the N-terminus, the 61-residue chain is MECHNQQSSQPPTTKTCPGETNCYKKQWSDHRGTIIERGCGCPSVKKGVKINCCTTDRCNN.

Residues 1–16 (MECHNQQSSQPPTTKT) are compositionally biased toward polar residues. The tract at residues 1 to 20 (MECHNQQSSQPPTTKTCPGE) is disordered. Cystine bridges form between cysteine 3-cysteine 23, cysteine 17-cysteine 40, cysteine 42-cysteine 53, and cysteine 54-cysteine 59.

It belongs to the three-finger toxin family. Short-chain subfamily. Type I alpha-neurotoxin sub-subfamily. In terms of tissue distribution, expressed by the venom gland.

The protein resides in the secreted. In terms of biological role, binds to muscle nicotinic acetylcholine receptor (nAChR) and inhibit acetylcholine from binding to the receptor, thereby impairing neuromuscular transmission. This chain is Short neurotoxin 1, found in Naja melanoleuca (Forest cobra).